The following is a 318-amino-acid chain: tRNA U34 carboxymethyltransferase (318 aa).

Residues Lys85, Trp99, Lys104, Gly124, 175-176, Met190, Tyr194, and Arg311 contribute to the carboxy-S-adenosyl-L-methionine site; that span reads LD.

The protein belongs to the class I-like SAM-binding methyltransferase superfamily. CmoB family. In terms of assembly, homotetramer.

It catalyses the reaction carboxy-S-adenosyl-L-methionine + 5-hydroxyuridine(34) in tRNA = 5-carboxymethoxyuridine(34) in tRNA + S-adenosyl-L-homocysteine + H(+). Catalyzes carboxymethyl transfer from carboxy-S-adenosyl-L-methionine (Cx-SAM) to 5-hydroxyuridine (ho5U) to form 5-carboxymethoxyuridine (cmo5U) at position 34 in tRNAs. The polypeptide is tRNA U34 carboxymethyltransferase (Ruthia magnifica subsp. Calyptogena magnifica).